We begin with the raw amino-acid sequence, 422 residues long: Protein IQ-DOMAIN 5 (422 aa).

The Nuclear localization signal motif lies at Ser-23 to Lys-30. IQ domains lie at Glu-87–Arg-115, Leu-116–Ala-138, and Leu-139–Gln-164. Residues Gln-137–Val-151 are calmodulin-binding. The interval Gly-269–Ala-422 is disordered. Residues Met-273–Cys-308 are compositionally biased toward polar residues. Over residues Ser-310–Ser-327 the composition is skewed to low complexity. The segment covering Asn-355 to Leu-371 has biased composition (basic and acidic residues). Polar residues predominate over residues Leu-373–Ala-387. The segment covering Arg-412–Ala-422 has biased composition (basic and acidic residues).

This sequence belongs to the IQD family. Binds to multiple calmodulin (CaM) in the presence of Ca(2+) and CaM-like proteins. As to expression, expressed mostly in vegetative tissues including older parts of the root, cotyledons, leaves and shoot apical meristems (SAM). Present at low levels in pollen, siliques and seeds.

Its subcellular location is the nucleus. It is found in the cytoplasm. The protein localises to the cytoskeleton. It localises to the spindle. The protein resides in the phragmoplast. Functionally, may be involved in cooperative interactions with calmodulins or calmodulin-like proteins. Recruits calmodulin (CaM) calcium sensor proteins to cortical microtubule arrays, thus being a potential scaffold in cellular signaling and trafficking. Binds to microtubules (MTs) and promotes MT assembly and dynamics to modulate pavement cell (PC) morphogenesis via cellulose deposition-dependent anisotropic cell expansion triggered by cellulose synthase complexes (CSCs). May associate with nucleic acids and regulate gene expression at the transcriptional or post-transcriptional level. The chain is Protein IQ-DOMAIN 5 from Arabidopsis thaliana (Mouse-ear cress).